The chain runs to 660 residues: Solute carrier family 5 member 4B (660 aa).

The Cytoplasmic segment spans residues Met1 to Ala27. Residues Asp28–Val48 form a helical membrane-spanning segment. Topologically, residues Arg49 to Thr54 are extracellular. Residues Val55 to Phe75 form a helical membrane-spanning segment. The Cytoplasmic segment spans residues Ala76–Asn82. A helical membrane pass occupies residues His83–Trp103. Over Asn104–Ala105 the chain is Extracellular. A helical transmembrane segment spans residues Leu106–Leu126. Residues Thr127 to Gln142 are Cytoplasmic-facing. Residues Ile143–Phe163 traverse the membrane as a helical segment. At Ser164–Ala166 the chain is on the extracellular side. The helical transmembrane segment at Ile167–Ile187 threads the bilayer. The Cytoplasmic portion of the chain corresponds to Thr188 to Thr208. The helical transmembrane segment at Phe209–Tyr229 threads the bilayer. The Extracellular segment spans residues Glu230 to Pro277. Residues Gly278–Val298 form a helical membrane-spanning segment. Residues Gln299–Ala313 lie on the Cytoplasmic side of the membrane. The helical transmembrane segment at Cys314–Ile334 threads the bilayer. Topologically, residues Ser335–Gly380 are extracellular. Residues Leu381–Ala401 traverse the membrane as a helical segment. The Cytoplasmic segment spans residues Ser402–Met423. Residues Ile424 to Val444 form a helical membrane-spanning segment. Topologically, residues Gln445 to Tyr455 are extracellular. A helical membrane pass occupies residues Ile456 to Phe476. Over Phe477–Gly484 the chain is Cytoplasmic. A helical transmembrane segment spans residues Ala485 to Val505. Topologically, residues Tyr506–Tyr526 are extracellular. A helical membrane pass occupies residues Met527–Leu547. Topologically, residues Thr548–Thr639 are cytoplasmic. The chain crosses the membrane as a helical span at residues Val640 to Ala660.

This sequence belongs to the sodium:solute symporter (SSF) (TC 2.A.21) family. As to expression, expressed in small intestine. Expressed in kidney.

The protein localises to the cell membrane. The catalysed reaction is D-glucose(out) + 2 Na(+)(out) = D-glucose(in) + 2 Na(+)(in). Inhibited by phlorizin. In terms of biological role, low-affinity sodium/D-glucose symporter. Generates D-glucose-induced depolarization in a pH-independent manner. The chain is Solute carrier family 5 member 4B from Mus musculus (Mouse).